We begin with the raw amino-acid sequence, 476 residues long: Cysteine--tRNA ligase (476 aa).

Zn(2+) is bound at residue C29. The 'HIGH' region motif lies at 31–41 (PTVYDYPHLGH). 3 residues coordinate Zn(2+): C209, H234, and E238. Residues 266–270 (KMSKS) carry the 'KMSKS' region motif. K269 contacts ATP.

It belongs to the class-I aminoacyl-tRNA synthetase family. It depends on Zn(2+) as a cofactor.

It is found in the cytoplasm. It catalyses the reaction tRNA(Cys) + L-cysteine + ATP = L-cysteinyl-tRNA(Cys) + AMP + diphosphate. The chain is Cysteine--tRNA ligase from Thermococcus gammatolerans (strain DSM 15229 / JCM 11827 / EJ3).